Consider the following 781-residue polypeptide: Mitochondrial inner membrane m-AAA protease component paraplegin (781 aa).

The transit peptide at 1–43 (MAAALLLLRALRQSPEPGPWRLWAQLSGRSPGLFSGAGGRRPY) directs the protein to the mitochondrion. Positions 44-105 (VVRGTPIGLA…GSTLYFNTSG (62 aa)) are cleaved as a propeptide — removed in mature form. The disordered stretch occupies residues 105–134 (GLKQKNKDDDKPKGKAPEDDEEERRRKERE). Over 106–144 (LKQKNKDDDKPKGKAPEDDEEERRRKEREDQMYRERLRT) the chain is Mitochondrial matrix. Basic and acidic residues predominate over residues 109–134 (KNKDDDKPKGKAPEDDEEERRRKERE). A helical membrane pass occupies residues 145–165 (LFIIAIVMSLLNSLSTSGGSI). The Mitochondrial intermembrane segment spans residues 166–248 (SWADFVNEML…DRIPVSYKRT (83 aa)). Residues 249 to 269 (GFFGNALYALGMTAVGLAILW) form a helical membrane-spanning segment. The Mitochondrial matrix portion of the chain corresponds to 270 to 781 (YVFRLAGMTG…ASGEEEAPAP (512 aa)). ATP is bound by residues Ala312, Gly352, Cys353, Gly354, Lys355, Thr356, and Leu357. At Tyr505 the chain carries 3'-nitrotyrosine. His574 is a binding site for Zn(2+). Residue Glu575 is part of the active site. Zn(2+) is bound by residues His578 and Asp650. Residues 701–781 (HEARLLVARA…ASGEEEAPAP (81 aa)) are interaction with PPIF.

This sequence in the N-terminal section; belongs to the AAA ATPase family. The protein in the C-terminal section; belongs to the peptidase M41 family. In terms of assembly, forms heterooligomers with AFG3L2; the m-AAA protease is composed of heterohexamers of AFG3L2 and SPG7. Component of the mitochondrial permeability transition pore complex (mPTPC), at least composed of SPG7, VDAC1 and PPIF. Interacts with MAIP1. Requires Zn(2+) as cofactor. In terms of processing, upon import into the mitochondrion, the N-terminal transit peptide is cleaved by the mitochondrial-processing peptidase (MPP) to generate an intermediate form which undergoes a second proteolytic cleavage mediated by proteases AFG3L2 removing an additional N-terminal fragment to generate the proteolytically active mature form.

It localises to the mitochondrion inner membrane. It carries out the reaction ATP + H2O = ADP + phosphate + H(+). Its function is as follows. Catalytic component of the m-AAA protease, a protease that plays a key role in proteostasis of inner mitochondrial membrane proteins, and which is essential for axonal and neuron development. SPG7 possesses both ATPase and protease activities: the ATPase activity is required to unfold substrates, threading them into the internal proteolytic cavity for hydrolysis into small peptide fragments. The m-AAA protease exerts a dual role in the mitochondrial inner membrane: it mediates the processing of specific regulatory proteins and ensures protein quality control by degrading misfolded polypeptides. Mediates protein maturation of the mitochondrial ribosomal subunit MRPL32/bL32m by catalyzing the cleavage of the presequence of MRPL32/bL32m prior to assembly into the mitochondrial ribosome. Acts as a regulator of calcium in neurons by mediating degradation of SMDT1/EMRE before its assembly with the uniporter complex, limiting the availability of SMDT1/EMRE for MCU assembly and promoting efficient assembly of gatekeeper subunits with MCU. Also regulates mitochondrial calcium by catalyzing degradation of MCU. Plays a role in the formation and regulation of the mitochondrial permeability transition pore (mPTP) and its proteolytic activity is dispensable for this function. This chain is Mitochondrial inner membrane m-AAA protease component paraplegin (Spg7), found in Rattus norvegicus (Rat).